Reading from the N-terminus, the 262-residue chain is Lens fiber major intrinsic protein (262 aa).

At 1–9 the chain is on the cytoplasmic side; the sequence is MRELRSSSF. Residues 10–29 traverse the membrane as a helical segment; sequence WRAILAEFLGSLLYTLLGLG. The Extracellular segment spans residues 30-41; sequence ASLRWAPGPHGV. Residues 42–59 traverse the membrane as a helical segment; sequence LGSALAFGLAQATLVQAL. At 60–61 the chain is on the cytoplasmic side; the sequence is GH. The segment at residues 62–77 is an intramembrane region (discontinuously helical); the sequence is VSGGHINPAITLAFLL. An NPA 1 motif is present at residues 68-70; the sequence is NPA. Topologically, residues 78–82 are cytoplasmic; that stretch reads ASQLS. The chain crosses the membrane as a helical span at residues 83-106; that stretch reads LPRALGYLLAQLLGALAGAGVLYG. The Extracellular portion of the chain corresponds to 107 to 127; that stretch reads VTPAAVRGTLGLSALHPSVGP. The helical transmembrane segment at 128 to 148 threads the bilayer; sequence GQGTVVELLLTAQFILCVFAS. Residues 149–156 are Cytoplasmic-facing; sequence FDDRHDGR. Residues 157–175 traverse the membrane as a helical segment; sequence PGSAALPVGFSLALGHLFG. Residues 176–178 are Extracellular-facing; that stretch reads IPF. The discontinuously helical intramembrane region spans 179–193; that stretch reads TGAGMNPARSFAPAV. Residues 184-186 carry the NPA 2 motif; it reads NPA. At 194–200 the chain is on the extracellular side; sequence ITRNFTN. The chain crosses the membrane as a helical span at residues 201-222; that stretch reads HWVFWAGPLLGAALAALLYELA. Residues 223 to 262 are Cytoplasmic-facing; it reads LCPRARSMAERLAVLRGEPPAAAPPPEPPAEPLELKTQGL. The interval 227–237 is interaction with CALM; the sequence is ARSMAERLAVL. The segment at 240 to 262 is disordered; it reads EPPAAAPPPEPPAEPLELKTQGL. Positions 243–253 are enriched in pro residues; sequence AAAPPPEPPAE.

This sequence belongs to the MIP/aquaporin (TC 1.A.8) family. In terms of assembly, homotetramer; each monomer provides an independent water pore. Two homotetramers on opposing membranes can dimerize, forming a cell-cell junction. Interacts with CALM; the calcium-calmodulin/CALM complex interacts with the cytoplasmic domains of two aquaporins, leading to channel closure. During early stages of lens development, interacts through its C-terminal region with Cx56 and GJA8/Cx45.6. As to expression, major component of lens fiber gap junctions.

Its subcellular location is the cell membrane. It localises to the cell junction. It catalyses the reaction H2O(in) = H2O(out). The water channel activity is inhibited by calcium through calmodulin/CALM. Functionally, aquaporins form homotetrameric transmembrane channels, with each monomer independently mediating water transport across the plasma membrane along its osmotic gradient. Specifically expressed in lens fiber cells, this aquaporin is crucial for maintaining lens water homeostasis and transparency. Beyond water permeability, it also acts as a cell-to-cell adhesion molecule, forming thin junctions between lens fiber cells that are essential for maintaining the ordered structure and transparency of the lens. In Gallus gallus (Chicken), this protein is Lens fiber major intrinsic protein.